The sequence spans 247 residues: Probable transcriptional regulatory protein LAF_0541 (247 aa).

The disordered stretch occupies residues 1 to 22 (MSGHSKWHNIQGRKNAQDAKRG).

This sequence belongs to the TACO1 family.

Its subcellular location is the cytoplasm. This chain is Probable transcriptional regulatory protein LAF_0541, found in Limosilactobacillus fermentum (strain NBRC 3956 / LMG 18251) (Lactobacillus fermentum).